The sequence spans 281 residues: Putative phosphatase/phosphodiesterase MG246 (281 aa).

Asp-11, Glu-42, Asn-43, and Asn-70 together coordinate Fe cation. The Proton donor role is filled by His-71. The Fe cation site is built by His-157, His-182, and His-184.

This sequence belongs to the YmdB-like family. Requires Fe(3+) as cofactor.

This chain is Putative phosphatase/phosphodiesterase MG246, found in Mycoplasma genitalium (strain ATCC 33530 / DSM 19775 / NCTC 10195 / G37) (Mycoplasmoides genitalium).